The sequence spans 444 residues: Docking protein 3 (444 aa).

In terms of domain architecture, PH spans 7–123 (PVKDGLLYQQ…WMDPICQLAF (117 aa)). The segment at 47–66 (DVRDGGLGPGGDRPAGPGRR) is disordered. Ser138 bears the Phosphoserine mark. Residues 157–261 (EVAEFPVVVQ…ARQRERLPEL (105 aa)) enclose the IRS-type PTB domain. Phosphoserine occurs at positions 274, 308, and 314. Position 325 is a phosphotyrosine (Tyr325). Residues 354 to 390 (GLSNGGPEAQEGPPGGRSPLGSPIYHNSEELSWPGSA) form a disordered region. The segment covering 358-376 (GGPEAQEGPPGGRSPLGSP) has biased composition (low complexity). Residue Ser371 is modified to Phosphoserine.

Belongs to the DOK family. Type A subfamily. As to quaternary structure, on tyrosine phosphorylation, interacts with CSK and INPP5D/SHIP1 via their SH2 domains. Binds ABL1 through the PTB domain and in a kinase-dependent manner. Does not interact with RasGAP. Post-translationally, constitutively tyrosine-phosphorylated. In terms of processing, on IL2 stimulation, phosphorylated on C-terminal tyrosine residues possibly by Src kinases. Can also be phosphorylated by ABL1 kinase.

The protein localises to the cytoplasm. The protein resides in the cell membrane. DOK proteins are enzymatically inert adaptor or scaffolding proteins. They provide a docking platform for the assembly of multimolecular signaling complexes. DOK3 is a negative regulator of JNK signaling in B-cells through interaction with INPP5D/SHIP1. May modulate ABL1 function. The polypeptide is Docking protein 3 (Dok3) (Rattus norvegicus (Rat)).